Consider the following 110-residue polypeptide: MGRGVSAGGGQSSLGYLFGSGEAPKLAAVNKTPAETESSAHAPPTQAAAANAVDSIKQVPAGLNSNSANNYMRAEGQNTGNFITDRPSTKVHSAPGGGSSLDYLFGGGSN.

The interval 28-110 (AVNKTPAETE…LDYLFGGGSN (83 aa)) is disordered. Residues 40-52 (AHAPPTQAAAANA) show a composition bias toward low complexity. Positions 63–82 (LNSNSANNYMRAEGQNTGNF) are enriched in polar residues. Position 67 is a phosphoserine (Ser-67). A compositionally biased stretch (gly residues) spans 95–110 (PGGGSSLDYLFGGGSN).

This sequence belongs to the SPIRAL1 family. In terms of tissue distribution, ubiquitous.

In terms of biological role, acts redundantly with SPR1 in maintaining the cortical microtubules organization essential for anisotropic cell growth. The polypeptide is Protein SPIRAL1-like 2 (SP1L2) (Arabidopsis thaliana (Mouse-ear cress)).